A 340-amino-acid polypeptide reads, in one-letter code: N-acetyl-gamma-glutamyl-phosphate reductase (340 aa).

Cys-149 is an active-site residue.

It belongs to the NAGSA dehydrogenase family. Type 1 subfamily.

The protein resides in the cytoplasm. The catalysed reaction is N-acetyl-L-glutamate 5-semialdehyde + phosphate + NADP(+) = N-acetyl-L-glutamyl 5-phosphate + NADPH + H(+). Its pathway is amino-acid biosynthesis; L-arginine biosynthesis; N(2)-acetyl-L-ornithine from L-glutamate: step 3/4. Catalyzes the NADPH-dependent reduction of N-acetyl-5-glutamyl phosphate to yield N-acetyl-L-glutamate 5-semialdehyde. This chain is N-acetyl-gamma-glutamyl-phosphate reductase, found in Ruthia magnifica subsp. Calyptogena magnifica.